A 534-amino-acid chain; its full sequence is GMP synthase [glutamine-hydrolyzing] (534 aa).

A Glutamine amidotransferase type-1 domain is found at 20–210 (PVLVIDFGAQ…LLVGAGCRPS (191 aa)). The Nucleophile role is filled by Cys-97. Residues His-184 and Glu-186 contribute to the active site. Positions 211–408 (WTMINIVEEA…LGLPEDIVWR (198 aa)) constitute a GMPS ATP-PPase domain. 238-244 (SGGVDSA) lines the ATP pocket.

In terms of assembly, homodimer.

It catalyses the reaction XMP + L-glutamine + ATP + H2O = GMP + L-glutamate + AMP + diphosphate + 2 H(+). Its pathway is purine metabolism; GMP biosynthesis; GMP from XMP (L-Gln route): step 1/1. Its function is as follows. Catalyzes the synthesis of GMP from XMP. The sequence is that of GMP synthase [glutamine-hydrolyzing] from Parafrankia sp. (strain EAN1pec).